The primary structure comprises 153 residues: Interleukin-4 (153 aa).

Positions 1 to 24 (MGLTSQLLPPLFFLLACAGNFAHG) are cleaved as a signal peptide. 3 cysteine pairs are disulfide-bonded: C27/C151, C48/C89, and C70/C123. A glycan (N-linked (GlcNAc...) asparagine) is linked at N62.

It belongs to the IL-4/IL-13 family.

It localises to the secreted. In terms of biological role, participates in at least several B-cell activation processes as well as of other cell types. It is a costimulator of DNA-synthesis. It induces the expression of class II MHC molecules on resting B-cells. It enhances both secretion and cell surface expression of IgE and IgG1. It also regulates the expression of the low affinity Fc receptor for IgE (CD23) on both lymphocytes and monocytes. Positively regulates IL31RA expression in macrophages. Stimulates autophagy in dendritic cells by interfering with mTORC1 signaling and through the induction of RUFY4. The protein is Interleukin-4 (IL4) of Cercocebus atys (Sooty mangabey).